A 693-amino-acid chain; its full sequence is Elongation factor G (693 aa).

The region spanning 8–282 (EKTRNIGIMA…AVIDYLPSPL (275 aa)) is the tr-type G domain. Residues 17–24 (AHIDAGKT), 81–85 (DTPGH), and 135–138 (NKMD) contribute to the GTP site.

Belongs to the TRAFAC class translation factor GTPase superfamily. Classic translation factor GTPase family. EF-G/EF-2 subfamily.

It is found in the cytoplasm. Its function is as follows. Catalyzes the GTP-dependent ribosomal translocation step during translation elongation. During this step, the ribosome changes from the pre-translocational (PRE) to the post-translocational (POST) state as the newly formed A-site-bound peptidyl-tRNA and P-site-bound deacylated tRNA move to the P and E sites, respectively. Catalyzes the coordinated movement of the two tRNA molecules, the mRNA and conformational changes in the ribosome. The sequence is that of Elongation factor G from Staphylococcus aureus (strain Mu3 / ATCC 700698).